Consider the following 330-residue polypeptide: Protein TIFY 11f (330 aa).

The 37-residue stretch at 61-97 folds into the Tify 1 domain; it reads EAAAAAQLKIMYGGRMLVFDDFFPAGGAVVELVRAAA. Residues 124-142 carry the Jas motif; it reads PVVRKVSLQRFVEKRRRMR. The Nuclear localization signal signature appears at 126 to 133; it reads VRKVSLQR. A Tify 2 domain is found at 228–264; that stretch reads EAAAAAQLKIMYGGRMLVFDDFFPAGGAVVELVRAAA. The segment at 267-330 is disordered; it reads GRDDDGARAR…SGRTDDAAFY (64 aa).

The protein belongs to the TIFY/JAZ family. Ubiquitinated. Targeted for degradation by the SCF(COI1) E3 ubiquitin ligase-proteasome pathway during jasmonate signaling.

It is found in the nucleus. Repressor of jasmonate responses. The sequence is that of Protein TIFY 11f from Oryza sativa subsp. japonica (Rice).